The sequence spans 195 residues: 3-hydroxyanthranilate 3,4-dioxygenase (195 aa).

An O2-binding site is contributed by Arg-50. Residues His-54, Glu-60, and His-102 each contribute to the Fe cation site. Substrate is bound at residue Glu-60. Substrate-binding residues include Arg-106 and Glu-116. Positions 131, 136, 170, and 173 each coordinate a divalent metal cation.

It belongs to the 3-HAO family. Fe(2+) is required as a cofactor.

The protein localises to the cytoplasm. The enzyme catalyses 3-hydroxyanthranilate + O2 = (2Z,4Z)-2-amino-3-carboxymuconate 6-semialdehyde. It functions in the pathway cofactor biosynthesis; NAD(+) biosynthesis; quinolinate from L-kynurenine: step 3/3. Its function is as follows. Catalyzes the oxidative ring opening of 3-hydroxyanthranilate to 2-amino-3-carboxymuconate semialdehyde, which spontaneously cyclizes to quinolinate. This chain is 3-hydroxyanthranilate 3,4-dioxygenase (bna1), found in Aspergillus terreus (strain NIH 2624 / FGSC A1156).